The following is a 351-amino-acid chain: Photosystem II D2 protein (351 aa).

Residues 39-59 (CAYLAVGGWLTGTTFVTSWYT) form a helical membrane-spanning segment. Histidine 116 is a chlorophyll a binding site. The helical transmembrane segment at 123–139 (GFCLRQFEIARLVGLRP) threads the bilayer. Pheophytin a-binding residues include glutamine 128 and asparagine 141. A helical transmembrane segment spans residues 151-164 (VFVSVFLMYPLGQA). Histidine 196 is a chlorophyll a binding site. The chain crosses the membrane as a helical span at residues 206–226 (GALLCAIHGATVQNTLFEDGD). Residues histidine 213 and phenylalanine 260 each contribute to the a plastoquinone site. Histidine 213 is a binding site for Fe cation. Histidine 267 lines the Fe cation pocket. A helical membrane pass occupies residues 277–293 (GLWTSAFGIVGLALNLR).

It belongs to the reaction center PufL/M/PsbA/D family. PSII is composed of 1 copy each of membrane proteins PsbA, PsbB, PsbC, PsbD, PsbE, PsbF, PsbH, PsbI, PsbJ, PsbK, PsbL, PsbM, PsbT, PsbX, PsbY, PsbZ, Psb30/Ycf12, at least 3 peripheral proteins of the oxygen-evolving complex and a large number of cofactors. It forms dimeric complexes. The D1/D2 heterodimer binds P680, chlorophylls that are the primary electron donor of PSII, and subsequent electron acceptors. It shares a non-heme iron and each subunit binds pheophytin, quinone, additional chlorophylls, carotenoids and lipids. There is also a Cl(-1) ion associated with D1 and D2, which is required for oxygen evolution. The PSII complex binds additional chlorophylls, carotenoids and specific lipids. is required as a cofactor.

The protein resides in the plastid. It localises to the chloroplast thylakoid membrane. The catalysed reaction is 2 a plastoquinone + 4 hnu + 2 H2O = 2 a plastoquinol + O2. Functionally, photosystem II (PSII) is a light-driven water:plastoquinone oxidoreductase that uses light energy to abstract electrons from H(2)O, generating O(2) and a proton gradient subsequently used for ATP formation. It consists of a core antenna complex that captures photons, and an electron transfer chain that converts photonic excitation into a charge separation. The D1/D2 (PsbA/PsbD) reaction center heterodimer binds P680, the primary electron donor of PSII as well as several subsequent electron acceptors. D2 is needed for assembly of a stable PSII complex. The polypeptide is Photosystem II D2 protein (Porphyra purpurea (Red seaweed)).